The primary structure comprises 358 residues: Peptide chain release factor 1 (358 aa).

Gln233 carries the N5-methylglutamine modification.

The protein belongs to the prokaryotic/mitochondrial release factor family. Methylated by PrmC. Methylation increases the termination efficiency of RF1.

The protein resides in the cytoplasm. Its function is as follows. Peptide chain release factor 1 directs the termination of translation in response to the peptide chain termination codons UAG and UAA. The polypeptide is Peptide chain release factor 1 (Listeria monocytogenes serovar 1/2a (strain ATCC BAA-679 / EGD-e)).